The chain runs to 623 residues: Putative pentatricopeptide repeat-containing protein At3g11460, mitochondrial (623 aa).

The transit peptide at 1-35 directs the protein to the mitochondrion; sequence MIVVTSFVRNSAVAAVASTPWNVRLRELAYQSLFS. PPR repeat units lie at residues 17-51, 52-86, 87-117, 120-154, 155-189, 190-220, 221-255, 256-290, 291-321, 322-356, 357-387, and 393-423; these read ASTP…GSSP, DAFS…GCET, EPFV…NPQS, LSVC…GVSV, DSVT…GLDS, EVAV…MPVK, GLIT…GVCP, DPFT…GFVP, NVFV…MPVK, SLVS…GIRP, DGAV…MKRE, and GPEH…MPVE. A type E motif region spans residues 428 to 503; sequence VWGALLGACK…KPGYSYVEHK (76 aa). Positions 504 to 535 are type E(+) motif; sequence GRVHLFLAGDRSHEQTEEVHRMLDELETSVME. The segment at 536–623 is type DYW motif; it reads LAGNMDCDRG…DGVCSCKDYW (88 aa).

It belongs to the PPR family. PCMP-H subfamily. As to quaternary structure, interacts with MORF8/RIP1.

The protein localises to the mitochondrion. Its function is as follows. Involved in C-to-U editing of mitochondrial RNA. Required specifically for editing the mitochondrial NAD2 transcript. The polypeptide is Putative pentatricopeptide repeat-containing protein At3g11460, mitochondrial (PCMP-H52) (Arabidopsis thaliana (Mouse-ear cress)).